Reading from the N-terminus, the 51-residue chain is Insulin (51 aa).

3 cysteine pairs are disulfide-bonded: C7/C37, C19/C50, and C36/C41.

This sequence belongs to the insulin family. Heterodimer of a B chain and an A chain linked by two disulfide bonds.

Its subcellular location is the secreted. In terms of biological role, insulin decreases blood glucose concentration. It increases cell permeability to monosaccharides, amino acids and fatty acids. It accelerates glycolysis, the pentose phosphate cycle, and glycogen synthesis in liver. The chain is Insulin (INS) from Anser anser anser (Western greylag goose).